Consider the following 108-residue polypeptide: Thioredoxin (108 aa).

The Thioredoxin domain occupies 2 to 108; it reads NKIIELTDQN…LKEFLDENIN (107 aa). Cys-32 and Cys-35 are joined by a disulfide.

The protein belongs to the thioredoxin family.

Its function is as follows. Participates in various redox reactions through the reversible oxidation of its active center dithiol to a disulfide and catalyzes dithiol-disulfide exchange reactions. The sequence is that of Thioredoxin (trxA) from Buchnera aphidicola subsp. Acyrthosiphon pisum (strain APS) (Acyrthosiphon pisum symbiotic bacterium).